We begin with the raw amino-acid sequence, 891 residues long: Dynein axonemal intermediate chain 3 (891 aa).

The segment covering methionine 1 to proline 16 has biased composition (basic residues). The disordered stretch occupies residues methionine 1–glutamate 27. 4 WD repeats span residues glutamate 395–glutamate 435, glycine 477–proline 533, isoleucine 670–leucine 709, and cysteine 713–alanine 753. Positions histidine 817–aspartate 861 form a coiled coil.

Interacts with ACTR2; this interaction reduces binding of the Arp2/3 complex to the VCA domain of nucleation promoting factors. Part of the multisubunit axonemal dynein complex formed at least of two heavy chains and a number of intermediate and light chains. Found in a associated with the catalytic heavy chain DNAH2, the intermediate chain DNAI4, and the light chain DYNLT1.

Its subcellular location is the cytoplasm. In terms of biological role, acts as a negative regulator of cell migration, invasion, and metastasis downstream of p53/TP53, through inhibition of Arp2/3 complex-mediated actin polymerization. Via its association with the multisubunit axonemal dynein complex, is potentially involved in the regulation of cilia function. May play a role in osteogenesis of dental tissue-derived mesenchymal stem cells. This Macaca fascicularis (Crab-eating macaque) protein is Dynein axonemal intermediate chain 3 (DNAI3).